The chain runs to 312 residues: Malate dehydrogenase (312 aa).

Residues 7–13 and D34 contribute to the NAD(+) site; that span reads GASGGIG. The substrate site is built by R81 and R87. NAD(+)-binding positions include N94 and 117 to 119; that span reads ITN. The substrate site is built by N119 and R153. The active-site Proton acceptor is the H177. M227 serves as a coordination point for NAD(+).

Belongs to the LDH/MDH superfamily. MDH type 1 family. In terms of assembly, homodimer.

It catalyses the reaction (S)-malate + NAD(+) = oxaloacetate + NADH + H(+). Catalyzes the reversible oxidation of malate to oxaloacetate. The chain is Malate dehydrogenase from Actinobacillus succinogenes (strain ATCC 55618 / DSM 22257 / CCUG 43843 / 130Z).